The chain runs to 129 residues: uncharacterized protein (129 aa).

This is an uncharacterized protein from Archaeoglobus fulgidus (strain ATCC 49558 / DSM 4304 / JCM 9628 / NBRC 100126 / VC-16).